The following is a 626-amino-acid chain: Probable potassium transport system protein Kup (626 aa).

The next 13 helical transmembrane spans lie at 8–28 (VALP…IGTS), 44–64 (ISEA…TLSI), 102–122 (IYLI…GIIT), 139–159 (PAFD…LFMV), 171–191 (FGPI…YSII), 196–216 (ILWF…PFVA), 217–237 (FVAM…YADM), 249–269 (WFIV…ALLL), 281–301 (LLVP…AAVI), 339–359 (IYVP…IILF), 377–397 (MLCV…WPWW), 399–419 (VTLF…STSL), and 421–441 (ILSG…ILMT).

This sequence belongs to the HAK/KUP transporter (TC 2.A.72) family.

It is found in the cell inner membrane. It carries out the reaction K(+)(in) + H(+)(in) = K(+)(out) + H(+)(out). Its function is as follows. Transport of potassium into the cell. Likely operates as a K(+):H(+) symporter. The protein is Probable potassium transport system protein Kup of Acinetobacter baylyi (strain ATCC 33305 / BD413 / ADP1).